We begin with the raw amino-acid sequence, 395 residues long: Putative pyridoxal phosphate-dependent acyltransferase (395 aa).

Residue 110-111 (GF) participates in pyridoxal 5'-phosphate binding. Residue histidine 135 participates in substrate binding. Pyridoxal 5'-phosphate contacts are provided by residues serine 185, 210 to 213 (DDAH), and 240 to 243 (TLSK). Position 243 is an N6-(pyridoxal phosphate)lysine (lysine 243). Threonine 357 contributes to the substrate binding site.

It belongs to the class-II pyridoxal-phosphate-dependent aminotransferase family. In terms of assembly, homodimer. It depends on pyridoxal 5'-phosphate as a cofactor.

The sequence is that of Putative pyridoxal phosphate-dependent acyltransferase from Staphylococcus aureus (strain MRSA252).